A 351-amino-acid polypeptide reads, in one-letter code: Dihydroorotate dehydrogenase (quinone) (351 aa).

FMN is bound by residues 67-71 (AGFDK) and Thr-91. Residue Lys-71 participates in substrate binding. 116 to 120 (NAMGF) contributes to the substrate binding site. Residues Asn-145 and Asn-178 each contribute to the FMN site. Asn-178 serves as a coordination point for substrate. Ser-181 functions as the Nucleophile in the catalytic mechanism. Residue Asn-183 coordinates substrate. FMN contacts are provided by Lys-214 and Thr-242. Residue 243–244 (NT) participates in substrate binding. FMN is bound by residues Gly-262, Gly-291, and 312–313 (YS).

It belongs to the dihydroorotate dehydrogenase family. Type 2 subfamily. Monomer. The cofactor is FMN.

The protein localises to the cell membrane. It carries out the reaction (S)-dihydroorotate + a quinone = orotate + a quinol. Its pathway is pyrimidine metabolism; UMP biosynthesis via de novo pathway; orotate from (S)-dihydroorotate (quinone route): step 1/1. Functionally, catalyzes the conversion of dihydroorotate to orotate with quinone as electron acceptor. This is Dihydroorotate dehydrogenase (quinone) from Helicobacter pylori (strain P12).